The chain runs to 432 residues: Metacaspase-1 (432 aa).

Positions Met-1–Ser-11 are enriched in basic residues. Disordered stretches follow at residues Met-1 to Arg-21 and Pro-41 to Pro-87. The span at Ser-12 to Arg-21 shows a compositional bias: low complexity. Pro residues predominate over residues Gly-46 to Gln-74. Catalysis depends on residues His-223 and Cys-279.

The protein belongs to the peptidase C14B family.

Its function is as follows. Involved in cell death (apoptosis). This chain is Metacaspase-1 (casA), found in Sclerotinia sclerotiorum (strain ATCC 18683 / 1980 / Ss-1) (White mold).